Reading from the N-terminus, the 396-residue chain is Chaperone protein DnaJ (396 aa).

Residues 6 to 71 (DYYEVLEVTK…DKRSRYDQFG (66 aa)) enclose the J domain. The CR-type zinc finger occupies 154–236 (GVEKKFKLKK…CGGDGIVYGE (83 aa)). Zn(2+) contacts are provided by Cys-167, Cys-170, Cys-184, Cys-187, Cys-210, Cys-213, Cys-224, and Cys-227. 4 CXXCXGXG motif repeats span residues 167-174 (CNHCHGTG), 184-191 (CPTCKGSG), 210-217 (CPTCNGEG), and 224-231 (CKECGGDG).

Belongs to the DnaJ family. Homodimer. The cofactor is Zn(2+).

Its subcellular location is the cytoplasm. In terms of biological role, participates actively in the response to hyperosmotic and heat shock by preventing the aggregation of stress-denatured proteins and by disaggregating proteins, also in an autonomous, DnaK-independent fashion. Unfolded proteins bind initially to DnaJ; upon interaction with the DnaJ-bound protein, DnaK hydrolyzes its bound ATP, resulting in the formation of a stable complex. GrpE releases ADP from DnaK; ATP binding to DnaK triggers the release of the substrate protein, thus completing the reaction cycle. Several rounds of ATP-dependent interactions between DnaJ, DnaK and GrpE are required for fully efficient folding. Also involved, together with DnaK and GrpE, in the DNA replication of plasmids through activation of initiation proteins. The polypeptide is Chaperone protein DnaJ (Bacteroides thetaiotaomicron (strain ATCC 29148 / DSM 2079 / JCM 5827 / CCUG 10774 / NCTC 10582 / VPI-5482 / E50)).